The following is a 190-amino-acid chain: Biphenyl-2,3-diol 1,2-dioxygenase 3 (190 aa).

Residues 6–125 (RLAHFVLQTN…DGNMVELQID (120 aa)) enclose the VOC domain. Positions 9, 73, and 121 each coordinate Fe cation.

The protein belongs to the extradiol ring-cleavage dioxygenase family. As to quaternary structure, homohexamer. Requires Fe(2+) as cofactor.

The catalysed reaction is biphenyl-2,3-diol + O2 = 2-hydroxy-6-oxo-6-phenylhexa-2,4-dienoate + H(+). Its pathway is xenobiotic degradation; biphenyl degradation; 2-hydroxy-2,4-pentadienoate and benzoate from biphenyl: step 3/4. This Rhodococcus globerulus protein is Biphenyl-2,3-diol 1,2-dioxygenase 3 (bphC3).